We begin with the raw amino-acid sequence, 916 residues long: Protein translocase subunit SecA (916 aa).

Residues Q88, 106 to 110, and D519 each bind ATP; that span reads GEGKT. Residues C902, C904, C913, and C914 each coordinate Zn(2+).

It belongs to the SecA family. As to quaternary structure, monomer and homodimer. Part of the essential Sec protein translocation apparatus which comprises SecA, SecYEG and auxiliary proteins SecDF. Other proteins may also be involved. Zn(2+) serves as cofactor.

Its subcellular location is the cell inner membrane. It localises to the cytoplasm. The catalysed reaction is ATP + H2O + cellular proteinSide 1 = ADP + phosphate + cellular proteinSide 2.. Its function is as follows. Part of the Sec protein translocase complex. Interacts with the SecYEG preprotein conducting channel. Has a central role in coupling the hydrolysis of ATP to the transfer of proteins into and across the cell membrane, serving as an ATP-driven molecular motor driving the stepwise translocation of polypeptide chains across the membrane. The chain is Protein translocase subunit SecA from Treponema pallidum (strain Nichols).